The primary structure comprises 315 residues: Homoserine kinase (315 aa).

97 to 107 (PPARGLGSSAT) lines the ATP pocket.

The protein belongs to the GHMP kinase family. Homoserine kinase subfamily.

Its subcellular location is the cytoplasm. It catalyses the reaction L-homoserine + ATP = O-phospho-L-homoserine + ADP + H(+). The protein operates within amino-acid biosynthesis; L-threonine biosynthesis; L-threonine from L-aspartate: step 4/5. Its function is as follows. Catalyzes the ATP-dependent phosphorylation of L-homoserine to L-homoserine phosphate. This Prochlorococcus marinus (strain MIT 9301) protein is Homoserine kinase.